The chain runs to 366 residues: Terpene cyclase-like protein flvF (366 aa).

It belongs to the terpene synthase family. In terms of assembly, homodimer.

The catalysed reaction is N,N-dimethyl-cadaverine + 2,6,9-trimethyl-13-oxatetracyclo[6.3.1.1(6,9).0(1,5)]tridecane carbocation = pre-flavunoidine + H(+). The protein operates within secondary metabolite biosynthesis; terpenoid biosynthesis. Functionally, terpene cyclase-like protein; part of the gene cluster that mediates the biosynthesis of flavunoidine, an alkaloidal terpenoid with a tetracyclic cage-like core connected to dimethylcadaverine via a C-N bond and acylated with 5,5-dimethyl-L-pipecolate. The tetracyclic core is synthesized by the terpene cyclase flvE and the cytochrome P450 monooxygenase flvD. The terpene cyclase flvE catalyzes the cyclization of farnesyl pyrophosphate (FPP) to form (1R,4R,5S)-(+)-acoradiene and the cytochrome P450 monooxygenase flvD is then responsible for oxidative conversion of (1R,4R,5S)-(+)-acoradiene into the tetracyclic cage present in the final product flavunoidine. In parallel, the N-methyltransferase flvH dimethylates L-lysine to give N,N-dimethyl-L-Lysin which is decarboxylated by flvG to afford dimethylcadaverine. The terpene cyclase-like protein flvF is the enzyme that attaches the dimethylcadaverine precusor at the C-7 of the tetracyclic cage to yield pre-flavunoidine. The cytochrome monooxygenase flvC hydroxylates the C-10 position of pre-flavunoidine whereas the NRPS flvI acylates the terpenoid core at the hydroxylated C-10 with dimethylpipecolate to yield final flavunoidine. The bifunctional enzyme flvA and the dehydrogenase flvB are responsible for the synthesis of the dimethylpipecolate precursor. The PLP-dependent lyase domain of flvA might use L-O-acetyl-homoserine and alpha-keto-isovalerate to form an intermediary ketone that can cyclize intramolecularly to yield an imine. The imine can be reduced by flvB to yield the 6-carboxylated pipecolate. The C-terminal alpha-KG-dependent oxygenase domain of flvA is then proposed to catalyze the decarboxylation to yield dimethylpipecolate. The chain is Terpene cyclase-like protein flvF from Aspergillus flavus (strain ATCC 200026 / FGSC A1120 / IAM 13836 / NRRL 3357 / JCM 12722 / SRRC 167).